Here is a 316-residue protein sequence, read N- to C-terminus: Pantothenate kinase (316 aa).

95 to 102 (GSVAVGKS) is a binding site for ATP.

The protein belongs to the prokaryotic pantothenate kinase family.

It is found in the cytoplasm. It catalyses the reaction (R)-pantothenate + ATP = (R)-4'-phosphopantothenate + ADP + H(+). It functions in the pathway cofactor biosynthesis; coenzyme A biosynthesis; CoA from (R)-pantothenate: step 1/5. In Erwinia tasmaniensis (strain DSM 17950 / CFBP 7177 / CIP 109463 / NCPPB 4357 / Et1/99), this protein is Pantothenate kinase.